A 466-amino-acid polypeptide reads, in one-letter code: 3-isopropylmalate dehydratase large subunit (466 aa).

[4Fe-4S] cluster contacts are provided by Cys-347, Cys-407, and Cys-410.

Belongs to the aconitase/IPM isomerase family. LeuC type 1 subfamily. Heterodimer of LeuC and LeuD. The cofactor is [4Fe-4S] cluster.

It catalyses the reaction (2R,3S)-3-isopropylmalate = (2S)-2-isopropylmalate. The protein operates within amino-acid biosynthesis; L-leucine biosynthesis; L-leucine from 3-methyl-2-oxobutanoate: step 2/4. In terms of biological role, catalyzes the isomerization between 2-isopropylmalate and 3-isopropylmalate, via the formation of 2-isopropylmaleate. This is 3-isopropylmalate dehydratase large subunit from Shewanella woodyi (strain ATCC 51908 / MS32).